Reading from the N-terminus, the 1020-residue chain is 26S proteasome non-ATPase regulatory subunit 1 (1020 aa).

The tract at residues 279–322 is disordered; the sequence is TALPSTFKPQGTTSEDGAKSEGDKSKSDEDITEETPADDKVERT. The segment covering 281 to 293 has biased composition (polar residues); sequence LPSTFKPQGTTSE. Thr-291 carries the post-translational modification Phosphothreonine. Residues 294-307 show a composition bias toward basic and acidic residues; sequence DGAKSEGDKSKSDE. A phosphoserine mark is found at Ser-298, Ser-303, and Ser-305. A Phosphothreonine modification is found at Thr-310. PC repeat units lie at residues 418–452, 456–489, 491–525, 526–560, 562–595, 596–631, 632–664, 666–701, 702–742, and 745–777; these read TATA…SSGY, GALY…ENVR, GGCL…VTGE, AAGI…EKIL, GLAV…VLRR, SGMY…DVRR, AAVT…PHVR, GAAM…FVRQ, GALI…DVMA, and GAIL…QAVV. 2 disordered regions span residues 855-950 and 999-1020; these read QKRR…NPAR and FGPM…YIED. 2 stretches are compositionally biased toward basic and acidic residues: residues 858-867 and 876-939; these read RENADKKEDE and KEGA…KEPE. Over residues 1003–1020 the composition is skewed to acidic residues; the sequence is NDEEKEPEPPEPFEYIED.

Belongs to the proteasome subunit S1 family.

Acts as a regulatory subunit of the 26S proteasome which is involved in the ATP-dependent degradation of ubiquitinated proteins. In Drosophila melanogaster (Fruit fly), this protein is 26S proteasome non-ATPase regulatory subunit 1 (Rpn2).